Reading from the N-terminus, the 398-residue chain is Arylacetamide deacetylase (398 aa).

Over 1–5 the chain is Cytoplasmic; sequence MGRTI. A helical; Signal-anchor for type II membrane protein membrane pass occupies residues 6 to 26; the sequence is FLLISVVLVAYYIYIPLPDDI. Residues 27 to 398 lie on the Lumenal side of the membrane; the sequence is EEPWKIILGN…QYLNWLHKNL (372 aa). N-linked (GlcNAc...) asparagine glycosylation occurs at N77. Positions 110–112 match the Involved in the stabilization of the negatively charged intermediate by the formation of the oxyanion hole motif; that stretch reads HGG. A disulfide bridge connects residues C115 and C339. Residue S188 is part of the active site. N-linked (GlcNAc...) asparagine glycans are attached at residues N192, N281, and N324. Catalysis depends on residues D342 and H372.

Belongs to the 'GDXG' lipolytic enzyme family. As to expression, highest levels in liver with lower levels in jejunum, kidney and testis.

The protein resides in the endoplasmic reticulum membrane. It localises to the microsome membrane. It carries out the reaction a triacylglycerol + H2O = a diacylglycerol + a fatty acid + H(+). In terms of biological role, displays cellular triglyceride lipase activity in liver, increases the levels of intracellular fatty acids derived from the hydrolysis of newly formed triglyceride stores and plays a role in very low-density lipoprotein assembly. Displays serine esterase activity in liver. Deacetylates a variety of arylacetamide substrates, including xenobiotic compounds and procarcinogens, converting them to the primary arylamide compounds and increasing their toxicity. The chain is Arylacetamide deacetylase (Aadac) from Rattus norvegicus (Rat).